We begin with the raw amino-acid sequence, 354 residues long: N-acetyl-gamma-glutamyl-phosphate reductase (354 aa).

The active site involves C156.

Belongs to the NAGSA dehydrogenase family. Type 1 subfamily.

It is found in the cytoplasm. It carries out the reaction N-acetyl-L-glutamate 5-semialdehyde + phosphate + NADP(+) = N-acetyl-L-glutamyl 5-phosphate + NADPH + H(+). It functions in the pathway amino-acid biosynthesis; L-arginine biosynthesis; N(2)-acetyl-L-ornithine from L-glutamate: step 3/4. Functionally, catalyzes the NADPH-dependent reduction of N-acetyl-5-glutamyl phosphate to yield N-acetyl-L-glutamate 5-semialdehyde. This is N-acetyl-gamma-glutamyl-phosphate reductase from Bordetella pertussis (strain Tohama I / ATCC BAA-589 / NCTC 13251).